A 170-amino-acid chain; its full sequence is RNA pyrophosphohydrolase (170 aa).

The Nudix hydrolase domain maps to 6–150; the sequence is GFRPNVGIIL…KRDVYRRALR (145 aa). A Nudix box motif is present at residues 39 to 60; the sequence is GGINAHESPEQALYRELHEEVG.

The protein belongs to the Nudix hydrolase family. RppH subfamily. Requires a divalent metal cation as cofactor.

Its function is as follows. Accelerates the degradation of transcripts by removing pyrophosphate from the 5'-end of triphosphorylated RNA, leading to a more labile monophosphorylated state that can stimulate subsequent ribonuclease cleavage. The polypeptide is RNA pyrophosphohydrolase (Cellvibrio japonicus (strain Ueda107) (Pseudomonas fluorescens subsp. cellulosa)).